Here is a 294-residue protein sequence, read N- to C-terminus: Ribosomal protein L11 methyltransferase (294 aa).

S-adenosyl-L-methionine is bound by residues Thr144, Gly165, Asp187, and Asn229.

This sequence belongs to the methyltransferase superfamily. PrmA family.

It localises to the cytoplasm. The enzyme catalyses L-lysyl-[protein] + 3 S-adenosyl-L-methionine = N(6),N(6),N(6)-trimethyl-L-lysyl-[protein] + 3 S-adenosyl-L-homocysteine + 3 H(+). Functionally, methylates ribosomal protein L11. This Cellvibrio japonicus (strain Ueda107) (Pseudomonas fluorescens subsp. cellulosa) protein is Ribosomal protein L11 methyltransferase.